The primary structure comprises 694 residues: Elongation factor G (694 aa).

Residues 8 to 287 enclose the tr-type G domain; sequence EDYRNFGIMA…AVVEFLPAPT (280 aa). Residues 17–24, 86–90, and 140–143 contribute to the GTP site; these read AHIDAGKT, DTPGH, and NKMD.

Belongs to the TRAFAC class translation factor GTPase superfamily. Classic translation factor GTPase family. EF-G/EF-2 subfamily.

Its subcellular location is the cytoplasm. In terms of biological role, catalyzes the GTP-dependent ribosomal translocation step during translation elongation. During this step, the ribosome changes from the pre-translocational (PRE) to the post-translocational (POST) state as the newly formed A-site-bound peptidyl-tRNA and P-site-bound deacylated tRNA move to the P and E sites, respectively. Catalyzes the coordinated movement of the two tRNA molecules, the mRNA and conformational changes in the ribosome. This Brucella melitensis biotype 1 (strain ATCC 23456 / CCUG 17765 / NCTC 10094 / 16M) protein is Elongation factor G.